The primary structure comprises 207 residues: Vascular endothelial growth factor B (207 aa).

A signal peptide spans 1–21 (MSPLLRRLLLAVLLQLAPAQA). Cystine bridges form between cysteine 47–cysteine 89, cysteine 78–cysteine 122, and cysteine 82–cysteine 124. Basic and acidic residues predominate over residues 124–139 (CRPKKRESAVKPDRAS). The tract at residues 124–207 (CRPKKRESAV…AASSVVKGGA (84 aa)) is disordered. Residues 174-201 (PSAHAAPSAASALTPGPATAAADAAASS) are compositionally biased toward low complexity.

The protein belongs to the PDGF/VEGF growth factor family. Homodimer; disulfide-linked. Can also form heterodimer with VEGF. VEGF-B186 is O-glycosylated.

It is found in the secreted. Growth factor for endothelial cells. VEGF-B167 binds heparin and neuropilin-1 whereas the binding to neuropilin-1 of VEGF-B186 is regulated by proteolysis. The protein is Vascular endothelial growth factor B (VEGFB) of Bos taurus (Bovine).